Reading from the N-terminus, the 118-residue chain is MEGLLKLSTLVIVCMLVTAPMASEAAISCGAVTGSLGQCYNYLTRGGFIPRGCCSGVQRLNSLARTTRDRQQACRCIQGAARALGSRLNAGRAARLPGACRVRISYPISARTNCNTVR.

An N-terminal signal peptide occupies residues 1-25; it reads MEGLLKLSTLVIVCMLVTAPMASEA. Cystine bridges form between C29–C76, C39–C53, C54–C100, and C74–C114.

The protein belongs to the plant LTP family.

Plant non-specific lipid-transfer proteins transfer phospholipids as well as galactolipids across membranes. May play a role in wax or cutin deposition in the cell walls of expanding epidermal cells and certain secretory tissues. This chain is Non-specific lipid-transfer protein 5 (LTP5), found in Arabidopsis thaliana (Mouse-ear cress).